We begin with the raw amino-acid sequence, 460 residues long: UDP-N-acetylmuramoylalanine--D-glutamate ligase (460 aa).

122–128 (GSNGKST) provides a ligand contact to ATP.

It belongs to the MurCDEF family.

The protein localises to the cytoplasm. The catalysed reaction is UDP-N-acetyl-alpha-D-muramoyl-L-alanine + D-glutamate + ATP = UDP-N-acetyl-alpha-D-muramoyl-L-alanyl-D-glutamate + ADP + phosphate + H(+). The protein operates within cell wall biogenesis; peptidoglycan biosynthesis. Functionally, cell wall formation. Catalyzes the addition of glutamate to the nucleotide precursor UDP-N-acetylmuramoyl-L-alanine (UMA). In Jannaschia sp. (strain CCS1), this protein is UDP-N-acetylmuramoylalanine--D-glutamate ligase.